We begin with the raw amino-acid sequence, 264 residues long: tRNA (guanine-N(1)-)-methyltransferase (264 aa).

S-adenosyl-L-methionine contacts are provided by residues Gly125 and Leu145–Leu150.

The protein belongs to the RNA methyltransferase TrmD family. In terms of assembly, homodimer.

Its subcellular location is the cytoplasm. The enzyme catalyses guanosine(37) in tRNA + S-adenosyl-L-methionine = N(1)-methylguanosine(37) in tRNA + S-adenosyl-L-homocysteine + H(+). In terms of biological role, specifically methylates guanosine-37 in various tRNAs. This Burkholderia multivorans (strain ATCC 17616 / 249) protein is tRNA (guanine-N(1)-)-methyltransferase.